Consider the following 232-residue polypeptide: Vesicle transport through interaction with t-SNAREs homolog 1B (232 aa).

Alanine 2 carries the N-acetylalanine modification. 2 interaction with CLINT1 regions span residues 2 to 23 (ATSAASSEHFEKLHEIFRGLLE) and 69 to 73 (APLTF). At 2-208 (ATSAASSEHF…SRKVITNKLL (207 aa)) the chain is on the cytoplasmic side. Residues 36-98 (AGTEEKKKLV…AKLHREVRST (63 aa)) adopt a coiled-coil conformation. A Phosphothreonine modification is found at threonine 103. Position 107 is an omega-N-methylarginine (arginine 107). Serine 138 bears the Phosphoserine mark. Residues 160–201 (GSEIIEELGEQRDQLERTKSRLVNTNENLSKSRKILRSMSRK) adopt a coiled-coil conformation. Residues 209–229 (LSVIIVLELAILVGLVYYKFF) form a helical; Anchor for type IV membrane protein membrane-spanning segment. Residues 230 to 232 (RHH) lie on the Vesicular side of the membrane.

It belongs to the VTI1 family. Forms a SNARE complex with STX7, STX8 and VAMP8 which functions in the homotypic fusion of late endosomes. Component of the SNARE complex composed of STX7, STX8, VAMP7 and VIT1B that is required for heterotypic fusion of late endosomes with lysosomes. May interact with STX17. Interacts with CLINT1.

The protein resides in the early endosome membrane. The protein localises to the late endosome membrane. It is found in the lysosome membrane. It localises to the cytoplasmic granule. Its subcellular location is the recycling endosome membrane. Functionally, V-SNARE that mediates vesicle transport pathways through interactions with t-SNAREs on the target membrane. These interactions are proposed to mediate aspects of the specificity of vesicle trafficking and to promote fusion of the lipid bilayers. This is Vesicle transport through interaction with t-SNAREs homolog 1B (Vti1b) from Rattus norvegicus (Rat).